A 1977-amino-acid polypeptide reads, in one-letter code: Voltage-dependent L-type calcium channel subunit alpha-1F (1977 aa).

Residues 1-11 (MSESEGGKDTT) show a composition bias toward basic and acidic residues. Positions 1 to 60 (MSESEGGKDTTPEPSPANGAGPGPEWGLCPGPPAVEGESSGASGLGTPKRRNQHSKHKTV) are disordered. The Cytoplasmic segment spans residues 1–92 (MSESEGGKDT…RSCISIVEWK (92 aa)). Positions 48–59 (PKRRNQHSKHKT) are enriched in basic residues. The I repeat unit spans residues 79–375 (NPLRRSCISI…LVLGVLSGEF (297 aa)). Residues 93–111 (PFDILILLTIFANCVALGV) form a helical membrane-spanning segment. The Extracellular segment spans residues 112–129 (YIPFPEDDSNTANHNLEQ). Residues 130–149 (VEYVFLVIFTVETVLKIVAY) form a helical membrane-spanning segment. Residues 150 to 161 (GLVLHPSAYIRN) are Cytoplasmic-facing. Residues 162 to 180 (GWNLLDFIIVVVGLFSVLL) traverse the membrane as a helical segment. Residues 181–201 (EQGPGRPGDAPHTGGKPGGFD) lie on the Extracellular side of the membrane. A helical membrane pass occupies residues 202 to 220 (VKALRAFRVLRPLRLVSGV). Residues 221 to 239 (PSLHIVLNSIMKALVPLLH) lie on the Cytoplasmic side of the membrane. The chain crosses the membrane as a helical span at residues 240 to 259 (IALLVLFVIIIYAIIGLELF). Topologically, residues 260–347 (LGRMHKTCYF…WMQDAMGYEL (88 aa)) are extracellular. Residue N295 is glycosylated (N-linked (GlcNAc...) asparagine). E330 provides a ligand contact to Ca(2+). The helical transmembrane segment at 348-372 (PWVYFVSLVIFGSFFVLNLVLGVLS) threads the bilayer. Residues 373 to 529 (GEFSKEREKA…ARCRRAVKSN (157 aa)) are Cytoplasmic-facing. The binding to the beta subunit stretch occupies residues 395 to 412 (QQMEEDLRGYLDWITQAE). Disordered stretches follow at residues 418–441 (DPSA…PQLA) and 455–488 (SHST…EDEE). A compositionally biased stretch (low complexity) spans 455 to 469 (SHSTRSTHSTSSHAS). The stretch at 515–761 (NRVLRARCRR…VFLAIAVDNL (247 aa)) is one II repeat. The chain crosses the membrane as a helical span at residues 530–549 (ACYWAVLLLVFLNTLTIASE). Residues 550 to 564 (HHGQPVWLTQIQEYA) lie on the Extracellular side of the membrane. Residues 565 to 583 (NKVLLCLFTVEMLLKLYGL) traverse the membrane as a helical segment. Topologically, residues 584-591 (GPSAYVSS) are cytoplasmic. The helical transmembrane segment at 592 to 610 (FFNRFDCFVVCGGILETTL) threads the bilayer. Topologically, residues 611–620 (VEVGAMQPLG) are extracellular. Residues 621–639 (ISVLRCVRLLRIFKVTRHW) form a helical membrane-spanning segment. Residues 640-658 (ASLSNLVASLLNSMKSIAS) are Cytoplasmic-facing. Residues 659 to 679 (LLLLLFLFIIIFSLLGMQLFG) form a helical membrane-spanning segment. The Extracellular portion of the chain corresponds to 680-733 (GKFNFDQTHTKRSTFDTFPQALLTVFQILTGEDWNVVMYDGIMAYGGPFFPGML). E711 contributes to the Ca(2+) binding site. The helical transmembrane segment at 734–758 (VCIYFIILFICGNYILLNVFLAIAV) threads the bilayer. Over 759–871 (DNLASGDAGT…KGCHTLIHHH (113 aa)) the chain is Cytoplasmic. Residues 767-830 (GTAKDKGGEK…EEEEEGAGGV (64 aa)) form a disordered region. The segment covering 768 to 783 (TAKDKGGEKSNEKDLP) has biased composition (basic and acidic residues). Residues 807–826 (DMEEEEEEEEEEEEEEEEEG) are compositionally biased toward acidic residues. One copy of the III repeat lies at 858–1140 (NPLRKGCHTL…IFVGFVIITF (283 aa)). A helical transmembrane segment spans residues 872 to 890 (VFTNLILVFIILSSVSLAA). The Extracellular portion of the chain corresponds to 891–906 (EDPIRAHSFRNHILGY). A helical membrane pass occupies residues 907 to 926 (FDYAFTSIFTVEILLKMTVF). Residues 927–938 (GAFLHRGSFCRS) lie on the Cytoplasmic side of the membrane. A helical membrane pass occupies residues 939–957 (WFNMLDLLVVSVSLISFGI). Residues 958 to 963 (HSSAIS) lie on the Extracellular side of the membrane. A helical transmembrane segment spans residues 964–983 (VVKILRVLRVLRPLRAINRA). The Cytoplasmic segment spans residues 984 to 1002 (KGLKHVVQCVFVAIRTIGN). Residues 1003 to 1022 (IMIVTTLLQFMFACIGVQLF) form a helical membrane-spanning segment. Over 1023 to 1112 (KGKFYTCTDE…HGPIYNYRVE (90 aa)) the chain is Extracellular. The tract at residues 1060-1150 (RLWVNSDFNF…RAQGEQEYQN (91 aa)) is dihydropyridine binding. E1086 contributes to the Ca(2+) binding site. Residues 1113–1133 (ISVFFIVYIIIIAFFMMNIFV) form a helical membrane-spanning segment. Over 1134–1190 (GFVIITFRAQGEQEYQNCELDKNQRQCVEYALKAQPLRRYIPKNPHQYRVWATVNSA) the chain is Cytoplasmic. An IV repeat occupies 1177 to 1444 (NPHQYRVWAT…LFVAVIMDNF (268 aa)). The helical transmembrane segment at 1191-1209 (AFEYLMFLLILLNTVALAM) threads the bilayer. Residues 1210-1224 (QHYEQTAPFNYAMDI) lie on the Extracellular side of the membrane. The helical transmembrane segment at 1225-1244 (LNMVFTGLFTIEMVLKIIAF) threads the bilayer. Residues 1245 to 1251 (KPKHYFT) are Cytoplasmic-facing. Residues 1252 to 1273 (DAWNTFDALIVVGSIVDIAVTE) traverse the membrane as a helical segment. Residues 1274 to 1290 (VNNGGHLGESSEDSSRI) lie on the Extracellular side of the membrane. A helical membrane pass occupies residues 1291 to 1310 (SITFFRLFRVMRLVKLLSKG). Residues 1311-1329 (EGIRTLLWTFIKSFQALPY) lie on the Cytoplasmic side of the membrane. A helical transmembrane segment spans residues 1330 to 1349 (VALLIAMIFFIYAVIGMQMF). Over 1350 to 1416 (GKVALQDGTQ…GEEFTCGSNF (67 aa)) the chain is Extracellular. Residues 1397 to 1463 (RCDPESDFGP…LGPHHLDEFK (67 aa)) are dihydropyridine binding. The segment at 1409–1452 (EFTCGSNFAIAYFISFFMLCAFLIINLFVAVIMDNFDYLTRDWS) is phenylalkylamine binding. Residues 1417–1441 (AIAYFISFFMLCAFLIINLFVAVIM) traverse the membrane as a helical segment. At 1442–1977 (DNFDYLTRDW…GDEMACVHAL (536 aa)) the chain is on the cytoplasmic side. Disordered stretches follow at residues 1637 to 1754 (CDTE…EVPD) and 1816 to 1841 (DLPI…WATP). A compositionally biased stretch (acidic residues) spans 1638–1657 (DTEEEEEEGQEGVEEEDEKD). Composition is skewed to polar residues over residues 1661–1670 (NKATMVSQPS), 1702–1716 (TPTS…AGSN), 1733–1743 (GNSQPKGTKGQ), and 1829–1840 (SGPNRAQGSWAT).

The protein belongs to the calcium channel alpha-1 subunit (TC 1.A.1.11) family. CACNA1F subfamily. Voltage-dependent calcium channels are multisubunit complexes, consisting of alpha-1, alpha-2, beta and delta subunits in a 1:1:1:1 ratio. The channel activity is directed by the pore-forming and voltage-sensitive alpha-1 subunit. In many cases, this subunit is sufficient to generate voltage-sensitive calcium channel activity. The auxiliary subunits beta and alpha-2/delta linked by a disulfide bridge regulate the channel activity. Interacts (via IQ domain) with CABP4; in a calcium independent manner. As to quaternary structure, interacts with CABP4; suppresses robust calcium-dependent inactivation of channel without enhancing the hyperpolarized voltage-dependent activation. In terms of tissue distribution, expression in skeletal muscle and retina. Isoform 4 is expressed in retina.

The protein resides in the membrane. It catalyses the reaction Ca(2+)(in) = Ca(2+)(out). Functionally, voltage-sensitive calcium channels (VSCC) mediate the entry of calcium ions into excitable cells and are also involved in a variety of calcium-dependent processes, including muscle contraction, hormone or neurotransmitter release, gene expression, cell motility, cell division and cell death. The isoform alpha-1F gives rise to L-type calcium currents. Long-lasting (L-type) calcium channels belong to the 'high-voltage activated' (HVA) group. They are blocked by dihydropyridines (DHP), phenylalkylamines, and by benzothiazepines. Activates at more negative voltages and does not undergo calcium-dependent inactivation (CDI), due to incoming calcium ions, during depolarization. Its function is as follows. Voltage-dependent L-type calcium channel activates at more hyperpolarized voltages and exhibits a robust calcium-dependent inactivation (CDI), due to incoming calcium ions, during depolarizations. Voltage-sensitive calcium channels (VSCC) mediate the entry of calcium ions into excitable cells and are also involved in a variety of calcium-dependent processes, including muscle contraction, hormone or neurotransmitter release, gene expression, cell motility, cell division and cell death. The chain is Voltage-dependent L-type calcium channel subunit alpha-1F from Homo sapiens (Human).